The chain runs to 480 residues: DnaJ homolog subfamily A member 3, mitochondrial (480 aa).

The residue at position 58 (arginine 58) is an Omega-N-methylarginine; by CARM1. A J domain is found at 93-158 (DYYQILGVPR…VKRKQYDAYG (66 aa)). Lysine 134 is modified (N6-acetyllysine). The CR-type zinc finger occupies 223–301 (GVNKEFTVNI…CRGAGQAKQK (79 aa)). Position 236 (cysteine 236) interacts with Zn(2+). 4 CXXCXGXG motif repeats span residues 236-243 (CERCNGKG), 253-260 (CHYCGGSG), 275-282 (CRRCGGRG), and 289-296 (CVVCRGAG). At arginine 238 the chain carries Omega-N-methylarginine; by CARM1. Zn(2+) is bound by residues cysteine 239, cysteine 253, cysteine 256, cysteine 275, cysteine 278, cysteine 289, and cysteine 292. An Omega-N-methylarginine; by CARM1 modification is found at arginine 293. Residue serine 398 is modified to Phosphoserine. Positions 443–456 (LTSSGGSTMDSSAG) are enriched in polar residues. Residues 443–471 (LTSSGGSTMDSSAGSKARREAGEDEEGFL) form a disordered region.

In terms of assembly, interacts with JAK2, HSPA9B and IFN-gammaR2 chain. Interacts with Ras GTPase-activating protein 1 (RASA1). Isoform 2 interacts with MUSK (via the cytoplasmic domain). In terms of processing, tyrosine phosphorylated. In terms of tissue distribution, widely expressed with highest levels in heart, liver, lung and skeletal muscles. Also expressed in keratinocytes; expression level and distribution is altered in basal cell carcinomas.

The protein localises to the mitochondrion matrix. It localises to the cytoplasm. Its subcellular location is the cytosol. The protein resides in the postsynaptic cell membrane. Its function is as follows. Modulates apoptotic signal transduction or effector structures within the mitochondrial matrix. Affect cytochrome C release from the mitochondria and caspase 3 activation, but not caspase 8 activation. Isoform 1 increases apoptosis triggered by both TNF and the DNA-damaging agent mytomycin C; in sharp contrast, isoform 2 suppresses apoptosis. Can modulate IFN-gamma-mediated transcriptional activity. Isoform 2 may play a role in neuromuscular junction development as an effector of the MUSK signaling pathway. The sequence is that of DnaJ homolog subfamily A member 3, mitochondrial (DNAJA3) from Homo sapiens (Human).